A 218-amino-acid chain; its full sequence is Small ribosomal subunit protein uS3 (218 aa).

The KH type-2 domain maps to 2–71 (SAPQRRLPVY…IGRKGAIVKE (70 aa)).

This sequence belongs to the universal ribosomal protein uS3 family. In terms of assembly, part of the 30S ribosomal subunit.

Binds the lower part of the 30S subunit head. This Pyrobaculum aerophilum (strain ATCC 51768 / DSM 7523 / JCM 9630 / CIP 104966 / NBRC 100827 / IM2) protein is Small ribosomal subunit protein uS3.